The chain runs to 345 residues: Heat-inducible transcription repressor HrcA (345 aa).

It belongs to the HrcA family.

Its function is as follows. Negative regulator of class I heat shock genes (grpE-dnaK-dnaJ and groELS operons). Prevents heat-shock induction of these operons. This chain is Heat-inducible transcription repressor HrcA, found in Listeria welshimeri serovar 6b (strain ATCC 35897 / DSM 20650 / CCUG 15529 / CIP 8149 / NCTC 11857 / SLCC 5334 / V8).